Here is a 303-residue protein sequence, read N- to C-terminus: UDP-N-acetylenolpyruvoylglucosamine reductase (303 aa).

Positions 30 to 196 (IGGPADLLII…LEAVFKLKQD (167 aa)) constitute an FAD-binding PCMH-type domain. Residue Arg174 is part of the active site. Ser225 functions as the Proton donor in the catalytic mechanism. The active site involves Glu295.

This sequence belongs to the MurB family. Requires FAD as cofactor.

The protein resides in the cytoplasm. It catalyses the reaction UDP-N-acetyl-alpha-D-muramate + NADP(+) = UDP-N-acetyl-3-O-(1-carboxyvinyl)-alpha-D-glucosamine + NADPH + H(+). Its pathway is cell wall biogenesis; peptidoglycan biosynthesis. Its function is as follows. Cell wall formation. The protein is UDP-N-acetylenolpyruvoylglucosamine reductase of Bacillus pumilus (strain SAFR-032).